The primary structure comprises 47 residues: PhoP/PhoQ regulator MgrB (47 aa).

Residues 6-26 (WVVLGIVVVVCLLLWAQVFNI) form a helical membrane-spanning segment.

It belongs to the MgrB family. May form homooligomers. Probably interacts with the periplasmic domain of PhoQ.

It localises to the cell inner membrane. Functionally, phoP-regulated transcription is redox-sensitive, being activated when the periplasm becomes more reducing. MgrB acts between DsbA/DsbB and PhoP/PhoQ in this pathway. Represses PhoP/PhoQ signaling, possibly by binding to the periplasmic domain of PhoQ, altering its activity and that of downstream effector PhoP. This Salmonella gallinarum (strain 287/91 / NCTC 13346) protein is PhoP/PhoQ regulator MgrB.